The chain runs to 120 residues: Acylphosphatase-1 (120 aa).

The residue at position 2 (A2) is an N-acetylalanine. One can recognise an Acylphosphatase-like domain in the interval S8 to P98. Active-site residues include R23 and N41. A disordered region spans residues Y91–N120. A compositionally biased stretch (basic and acidic residues) spans I96–H107.

Belongs to the acylphosphatase family.

It localises to the cytoplasm. The catalysed reaction is an acyl phosphate + H2O = a carboxylate + phosphate + H(+). In Drosophila melanogaster (Fruit fly), this protein is Acylphosphatase-1 (Acyp).